Here is a 318-residue protein sequence, read N- to C-terminus: Actin-related protein 2/3 complex subunit 2A (318 aa).

Positions 297-318 are disordered; the sequence is RSMNNKSFKRLGLNEVNHTNSK.

The protein belongs to the ARPC2 family. In terms of assembly, component of the Arp2/3 complex composed of ARP2, ARP3, ARPC1/p41-ARC, ARPC2/p34-ARC, ARPC3/p21-ARC, ARPC4/p20-ARC and ARPC5/p16-ARC. Interacts with ARPC4. Expressed at low levels in all tissues with a relatively highest expression in inflorescences.

Its subcellular location is the cytoplasm. The protein resides in the cytoskeleton. It is found in the cell projection. Functions as actin-binding component of the Arp2/3 complex which is involved in regulation of actin polymerization and together with an activating nucleation-promoting factor (NPF) mediates the formation of branched actin networks. Seems to contact the mother actin filament. Arp2/3 complex plays a critical role in the control of cell morphogenesis via the modulation of cell polarity development. The protein is Actin-related protein 2/3 complex subunit 2A (ARPC2A) of Arabidopsis thaliana (Mouse-ear cress).